Reading from the N-terminus, the 253-residue chain is Indole-3-glycerol phosphate synthase (253 aa).

It belongs to the TrpC family.

The catalysed reaction is 1-(2-carboxyphenylamino)-1-deoxy-D-ribulose 5-phosphate + H(+) = (1S,2R)-1-C-(indol-3-yl)glycerol 3-phosphate + CO2 + H2O. It participates in amino-acid biosynthesis; L-tryptophan biosynthesis; L-tryptophan from chorismate: step 4/5. The polypeptide is Indole-3-glycerol phosphate synthase (Bacillus cereus (strain B4264)).